The following is a 490-amino-acid chain: Acetyl-coenzyme A carboxylase carboxyl transferase subunit beta, chloroplastic (490 aa).

One can recognise a CoA carboxyltransferase N-terminal domain in the interval 221–490; the sequence is LWVQCENCYG…PLNQKSSKIK (270 aa). The Zn(2+) site is built by C225, C228, C244, and C247. The C4-type zinc finger occupies 225 to 247; sequence CENCYGLNYKKFLKSKMNICEQC.

Belongs to the AccD/PCCB family. In terms of assembly, acetyl-CoA carboxylase is a heterohexamer composed of biotin carboxyl carrier protein, biotin carboxylase and 2 subunits each of ACCase subunit alpha and ACCase plastid-coded subunit beta (accD). It depends on Zn(2+) as a cofactor. Expressed in leaves, ripening and mature fruit.

Its subcellular location is the plastid. It is found in the chloroplast stroma. The protein resides in the chromoplast stroma. It carries out the reaction N(6)-carboxybiotinyl-L-lysyl-[protein] + acetyl-CoA = N(6)-biotinyl-L-lysyl-[protein] + malonyl-CoA. The protein operates within lipid metabolism; malonyl-CoA biosynthesis; malonyl-CoA from acetyl-CoA: step 1/1. Functionally, component of the acetyl coenzyme A carboxylase (ACC) complex. Biotin carboxylase (BC) catalyzes the carboxylation of biotin on its carrier protein (BCCP) and then the CO(2) group is transferred by the transcarboxylase to acetyl-CoA to form malonyl-CoA. Is up-regulated upon chromoplast differentiation, presumably for fatty acid biosynthesis. The sequence is that of Acetyl-coenzyme A carboxylase carboxyl transferase subunit beta, chloroplastic from Solanum lycopersicum (Tomato).